We begin with the raw amino-acid sequence, 331 residues long: Protoheme IX farnesyltransferase (331 aa).

Helical transmembrane passes span 63-83 (LACTLGGGALAAAAAGALNCL), 109-129 (SVFIGAVACTLVSSALLVSGV), 132-152 (LAAGLTLLGLCSYVLLYTAFL), 160-180 (IVFGGVAGAIPPLVGASAAAG), 188-208 (WLFSLVMVWTPAHFWALAILL), 215-235 (VGIPMLPTVSGPFVTAKAISV), 241-261 (VFLSFLGCFVLPEGGLLYGIL), and 294-314 (ILYMFGVCFLLVISRLQVSIV).

This sequence belongs to the UbiA prenyltransferase family. Protoheme IX farnesyltransferase subfamily.

The protein resides in the cell inner membrane. The enzyme catalyses heme b + (2E,6E)-farnesyl diphosphate + H2O = Fe(II)-heme o + diphosphate. It participates in porphyrin-containing compound metabolism; heme O biosynthesis; heme O from protoheme: step 1/1. Converts heme B (protoheme IX) to heme O by substitution of the vinyl group on carbon 2 of heme B porphyrin ring with a hydroxyethyl farnesyl side group. The sequence is that of Protoheme IX farnesyltransferase from Prochlorococcus marinus (strain NATL1A).